We begin with the raw amino-acid sequence, 490 residues long: Polyamine oxidase 2 (490 aa).

4 residues coordinate FAD: Glu-57, Arg-65, Val-246, and Glu-433. Residues 488 to 490 carry the Microbody targeting signal motif; the sequence is SRL.

Belongs to the flavin monoamine oxidase family. FAD is required as a cofactor. In terms of tissue distribution, highly expressed in flowers and siliques. Also found in leaf and stem and in low levels in cotyledons, roots and in seedlings.

Its subcellular location is the peroxisome. The enzyme catalyses spermine + O2 + H2O = 3-aminopropanal + spermidine + H2O2. It carries out the reaction N(1)-acetylspermine + O2 + H2O = 3-acetamidopropanal + spermidine + H2O2. The catalysed reaction is spermidine + O2 + H2O = 3-aminopropanal + putrescine + H2O2. Its pathway is amine and polyamine degradation; spermine degradation. It functions in the pathway amine and polyamine degradation; spermidine degradation. In terms of biological role, flavoenzyme involved in polyamine back-conversion. Catalyzes the oxidation of the secondary amino group of polyamines, such as spermine, spermidine and their acetyl derivatives. Substrate preference is N(1)-acetylspermine &gt; spermine &gt; spermidine. Plays an important role in the regulation of polyamine intracellular concentration. Involved in abscisic acid-mediated developmental processes. May contribute to nitric oxide-mediated effects on root growth. The chain is Polyamine oxidase 2 from Arabidopsis thaliana (Mouse-ear cress).